Here is a 696-residue protein sequence, read N- to C-terminus: Interleukin-1 receptor accessory protein-like 1 (696 aa).

Residues 1–18 (MKAPIPHLILLYATFTQS) form the signal peptide. One can recognise an Ig-like C2-type 1 domain in the interval 19 to 134 (LKVVTKRGSA…YCMKVSISLT (116 aa)). The Extracellular portion of the chain corresponds to 19 to 357 (LKVVTKRGSA…LLHKRELMYT (339 aa)). 2 disulfides stabilise this stretch: C31-C126 and C53-C118. N63, N122, and N138 each carry an N-linked (GlcNAc...) asparagine glycan. Intrachain disulfides connect C143/C185 and C164/C216. Ig-like C2-type domains are found at residues 143 to 232 (CYNS…TELT) and 242 to 350 (PKLL…VLLH). N213, N264, and N331 each carry an N-linked (GlcNAc...) asparagine glycan. A disulfide bond links C267 and C334. Residues 358 to 378 (VELAGGLGAILLLLVCLVTIY) form a helical membrane-spanning segment. The Cytoplasmic portion of the chain corresponds to 379-696 (KCYKIEIMLF…RETSISSVIW (318 aa)). The region spanning 403–559 (KDYDAYLSYT…KFWKRLQYEM (157 aa)) is the TIR domain. The active site involves E491. An interaction with NCS1 region spans residues 549–644 (SKFWKRLQYE…TGTLPLTSIG (96 aa)). Residues 659–680 (GQRPQTKSSREQNPDEAHTNSA) form a disordered region. Positions 666–676 (SSREQNPDEAH) are enriched in basic and acidic residues.

This sequence belongs to the interleukin-1 receptor family. As to quaternary structure, homodimer. Interacts (calcium-independent) with NCS1. Interacts (via the first immunoglobilin domain) with PTPRD (via the second immunoglobilin domain); this interaction is PTPRD-splicing-dependent and induces pre- and post-synaptic differentiation of neurons and is required for IL1RAPL1-mediated synapse formation. Detected at low levels in heart, skeletal muscle, ovary, skin, amygdala, caudate nucleus, corpus callosum, hippocampus, substantia nigra and thalamus. Detected at very low levels in tonsil, prostate, testis, small intestine, placenta, colon and fetal liver.

The protein resides in the cell membrane. It is found in the cytoplasm. The protein localises to the cell projection. Its subcellular location is the axon. It localises to the dendrite. The enzyme catalyses NAD(+) + H2O = ADP-D-ribose + nicotinamide + H(+). May regulate secretion and presynaptic differentiation through inhibition of the activity of N-type voltage-gated calcium channel. May activate the MAP kinase JNK. Plays a role in neurite outgrowth. During dendritic spine formation can bidirectionally induce pre- and post-synaptic differentiation of neurons by trans-synaptically binding to PTPRD. This chain is Interleukin-1 receptor accessory protein-like 1 (IL1RAPL1), found in Homo sapiens (Human).